The following is a 256-amino-acid chain: Tryptophan synthase alpha chain (256 aa).

Residues Glu-45 and Asp-56 each act as proton acceptor in the active site.

Belongs to the TrpA family. As to quaternary structure, tetramer of two alpha and two beta chains.

It carries out the reaction (1S,2R)-1-C-(indol-3-yl)glycerol 3-phosphate + L-serine = D-glyceraldehyde 3-phosphate + L-tryptophan + H2O. The protein operates within amino-acid biosynthesis; L-tryptophan biosynthesis; L-tryptophan from chorismate: step 5/5. Functionally, the alpha subunit is responsible for the aldol cleavage of indoleglycerol phosphate to indole and glyceraldehyde 3-phosphate. The polypeptide is Tryptophan synthase alpha chain (Christiangramia forsetii (strain DSM 17595 / CGMCC 1.15422 / KT0803) (Gramella forsetii)).